Here is a 560-residue protein sequence, read N- to C-terminus: Oxygen-dependent choline dehydrogenase (560 aa).

6-35 (DYIIIGGGSAGSVLGGRLSEDVSNNVLVLE) serves as a coordination point for FAD. His472 acts as the Proton acceptor in catalysis.

This sequence belongs to the GMC oxidoreductase family. FAD serves as cofactor.

The catalysed reaction is choline + A = betaine aldehyde + AH2. It carries out the reaction betaine aldehyde + NAD(+) + H2O = glycine betaine + NADH + 2 H(+). It participates in amine and polyamine biosynthesis; betaine biosynthesis via choline pathway; betaine aldehyde from choline (cytochrome c reductase route): step 1/1. Its function is as follows. Involved in the biosynthesis of the osmoprotectant glycine betaine. Catalyzes the oxidation of choline to betaine aldehyde and betaine aldehyde to glycine betaine at the same rate. This chain is Oxygen-dependent choline dehydrogenase, found in Staphylococcus xylosus.